A 294-amino-acid polypeptide reads, in one-letter code: N-acetylmuramic acid 6-phosphate etherase (294 aa).

An SIS domain is found at 54–217 (VTKSFEEEGR…STASMIGVGK (164 aa)). The active-site Proton donor is the Glu82. The active site involves Glu113.

It belongs to the GCKR-like family. MurNAc-6-P etherase subfamily. Homodimer.

The enzyme catalyses N-acetyl-D-muramate 6-phosphate + H2O = N-acetyl-D-glucosamine 6-phosphate + (R)-lactate. It functions in the pathway amino-sugar metabolism; N-acetylmuramate degradation. In terms of biological role, specifically catalyzes the cleavage of the D-lactyl ether substituent of MurNAc 6-phosphate, producing GlcNAc 6-phosphate and D-lactate. In Bacillus mycoides (strain KBAB4) (Bacillus weihenstephanensis), this protein is N-acetylmuramic acid 6-phosphate etherase.